Here is a 373-residue protein sequence, read N- to C-terminus: Secondary metabolism regulator laeA (373 aa).

2 disordered regions span residues 1–21 and 53–81; these read MFLN…PLNV and AAER…NPDR. The span at 67-77 shows a compositional bias: polar residues; that stretch reads GSPSINSTSSK.

This sequence belongs to the methyltransferase superfamily. LaeA methyltransferase family. In terms of assembly, component of the heterotrimeric velvet complex composed of laeA, veA and velB; VeA acting as a bridging protein between laeA and velB.

It localises to the nucleus. It carries out the reaction L-methionyl-[protein] + S-adenosyl-L-methionine = S-methyl-L-methionyl-[protein] + S-adenosyl-L-homocysteine. Its function is as follows. Methyltransferase that performs automethylation. No other methyl-accepting substrate has been identified yet. Component of the velvet transcription factor complex that acts as a global regulator for secondary metabolite gene expression. Controls the expression of the cyclopiazonic acid (CPA) gene clusters. Regulates also pigmentation and conidial head morphology. The sequence is that of Secondary metabolism regulator laeA from Aspergillus fumisynnematus.